The following is a 67-amino-acid chain: Surface composition regulator (67 aa).

This sequence belongs to the GlgS family.

In terms of biological role, major determinant of cell surface composition. Negatively regulates motility, adhesion and synthesis of biofilm exopolysaccharides. This chain is Surface composition regulator, found in Salmonella enteritidis PT4 (strain P125109).